Here is a 170-residue protein sequence, read N- to C-terminus: RNA pyrophosphohydrolase (170 aa).

A Nudix hydrolase domain is found at 8-151; it reads PYRPNVGIAL…KKALYAELIP (144 aa). The Nudix box signature appears at 42–63; the sequence is GGIDEGETPQVAALREMGEEIG.

The protein belongs to the Nudix hydrolase family. RppH subfamily. It depends on a divalent metal cation as a cofactor.

Accelerates the degradation of transcripts by removing pyrophosphate from the 5'-end of triphosphorylated RNA, leading to a more labile monophosphorylated state that can stimulate subsequent ribonuclease cleavage. This chain is RNA pyrophosphohydrolase, found in Gluconobacter oxydans (strain 621H) (Gluconobacter suboxydans).